Here is a 207-residue protein sequence, read N- to C-terminus: MSNTFATLPVMAGDDVPAGPVDPIFNRLLKDRIIWMGEEVKDDMANRICAQLLMLAAEDPKKDIWLYINSPGGSITAGMAIYDTMQLIEPDVATVGLGMCASMGQFLLSSGTKGKRYLTSHARVLMHQPSGGIGGTATDVRINAELIMDMKKTMSELTAEQTGHTLEEIYRDNEYDHWFTAQEALDYGFVDKLVTTPDTIGNNQQGE.

Serine 102 serves as the catalytic Nucleophile. Histidine 127 is an active-site residue.

Belongs to the peptidase S14 family. In terms of assembly, fourteen ClpP subunits assemble into 2 heptameric rings which stack back to back to give a disk-like structure with a central cavity, resembling the structure of eukaryotic proteasomes.

Its subcellular location is the cytoplasm. The catalysed reaction is Hydrolysis of proteins to small peptides in the presence of ATP and magnesium. alpha-casein is the usual test substrate. In the absence of ATP, only oligopeptides shorter than five residues are hydrolyzed (such as succinyl-Leu-Tyr-|-NHMec, and Leu-Tyr-Leu-|-Tyr-Trp, in which cleavage of the -Tyr-|-Leu- and -Tyr-|-Trp bonds also occurs).. Functionally, cleaves peptides in various proteins in a process that requires ATP hydrolysis. Has a chymotrypsin-like activity. Plays a major role in the degradation of misfolded proteins. The sequence is that of ATP-dependent Clp protease proteolytic subunit 2 from Bifidobacterium longum (strain NCC 2705).